The primary structure comprises 383 residues: Probable aspartate/prephenate aminotransferase (383 aa).

Positions 39, 125, and 175 each coordinate L-aspartate. Lys234 carries the post-translational modification N6-(pyridoxal phosphate)lysine. Arg361 serves as a coordination point for L-aspartate.

It belongs to the class-I pyridoxal-phosphate-dependent aminotransferase family. Homodimer. It depends on pyridoxal 5'-phosphate as a cofactor.

The protein resides in the cytoplasm. It carries out the reaction L-aspartate + 2-oxoglutarate = oxaloacetate + L-glutamate. The enzyme catalyses L-arogenate + oxaloacetate = prephenate + L-aspartate. Catalyzes the reversible conversion of aspartate and 2-oxoglutarate to glutamate and oxaloacetate. Can also transaminate prephenate in the presence of aspartate. The sequence is that of Probable aspartate/prephenate aminotransferase (aspC) from Thermus aquaticus.